The chain runs to 1205 residues: A disintegrin and metalloproteinase with thrombospondin motifs 3 (1205 aa).

Positions 1 to 20 (MVLLSLWLIAAALVEVRTSA) are cleaved as a signal peptide. A propeptide spanning residues 21–249 (DGQAGNEEMV…QLNETMRRRR (229 aa)) is cleaved from the precursor. N-linked (GlcNAc...) asparagine glycosylation is found at Asn83, Asn119, Asn242, and Asn345. Residues 256–460 (YNIEVLLGVD…HSYDCLLDDP (205 aa)) enclose the Peptidase M12B domain. Intrachain disulfides connect Cys333/Cys382, Cys376/Cys455, and Cys415/Cys441. His398 provides a ligand contact to Zn(2+). Residue Glu399 is part of the active site. Residues His402 and His408 each coordinate Zn(2+). Positions 470–550 (ELPGINYSMD…MWKNANQQKQ (81 aa)) constitute a Disintegrin domain. Asn475 is a glycosylation site (N-linked (GlcNAc...) asparagine). Disulfide bonds link Cys482–Cys507, Cys493–Cys516, Cys502–Cys535, Cys529–Cys540, Cys563–Cys600, Cys567–Cys605, and Cys578–Cys590. A TSP type-1 1 domain is found at 551-606 (DGNWGSWTKFGSCSRTCGTGVRFRTRQCNNPMPINGGQDCPGVNFEYQLCNTEECQ). The tract at residues 713 to 844 (RTVKGTFTRT…NSNNVIQEEL (132 aa)) is spacer. N-linked (GlcNAc...) asparagine glycosylation occurs at Asn814. TSP type-1 domains lie at 845 to 905 (DTFE…QECT), 906 to 965 (HPLW…NRVP), and 966 to 1014 (CPAQ…QLPP). Asn942 is a glycosylation site (N-linked (GlcNAc...) asparagine). Cystine bridges form between Cys978/Cys1010, Cys982/Cys1015, and Cys993/Cys999. One can recognise a PLAC domain in the interval 1015-1054 (CNDEPCLGDKSIFCQMEVLARYCSIPGYNKLCCESCSKRS). The segment at 1174–1205 (DSIGASSQARTSKKDGKIIDNRRPTRSSTLER) is disordered. Basic and acidic residues predominate over residues 1185–1205 (SKKDGKIIDNRRPTRSSTLER).

It depends on Zn(2+) as a cofactor. Post-translationally, the precursor is cleaved by a furin endopeptidase. In terms of processing, glycosylated. Can be O-fucosylated by POFUT2 on a serine or a threonine residue found within the consensus sequence C1-X(2)-(S/T)-C2-G of the TSP type-1 repeat domains where C1 and C2 are the first and second cysteine residue of the repeat, respectively. Fucosylated repeats can then be further glycosylated by the addition of a beta-1,3-glucose residue by the glucosyltransferase, B3GALTL. Fucosylation mediates the efficient secretion of ADAMTS family members. Can also be C-glycosylated with one or two mannose molecules on tryptophan residues within the consensus sequence W-X-X-W of the TPRs, and N-glycosylated. These other glycosylations can also facilitate secretion. Found in cartilage and skin.

The protein resides in the secreted. Its subcellular location is the extracellular space. It is found in the extracellular matrix. Its function is as follows. Cleaves the propeptides of type II collagen prior to fibril assembly. Does not act on types I and III collagens. The chain is A disintegrin and metalloproteinase with thrombospondin motifs 3 (ADAMTS3) from Homo sapiens (Human).